We begin with the raw amino-acid sequence, 270 residues long: Formamidopyrimidine-DNA glycosylase (270 aa).

Residue Pro2 is the Schiff-base intermediate with DNA of the active site. Residue Glu3 is the Proton donor of the active site. Lys56 functions as the Proton donor; for beta-elimination activity in the catalytic mechanism. 3 residues coordinate DNA: His89, Arg107, and Arg151. The segment at 236–270 (TVYGRAGEPCRVCATPIRLLRQGQRSTYYCPNCQK) adopts an FPG-type zinc-finger fold. The Proton donor; for delta-elimination activity role is filled by Arg260.

It belongs to the FPG family. In terms of assembly, monomer. Zn(2+) serves as cofactor.

It carries out the reaction Hydrolysis of DNA containing ring-opened 7-methylguanine residues, releasing 2,6-diamino-4-hydroxy-5-(N-methyl)formamidopyrimidine.. The catalysed reaction is 2'-deoxyribonucleotide-(2'-deoxyribose 5'-phosphate)-2'-deoxyribonucleotide-DNA = a 3'-end 2'-deoxyribonucleotide-(2,3-dehydro-2,3-deoxyribose 5'-phosphate)-DNA + a 5'-end 5'-phospho-2'-deoxyribonucleoside-DNA + H(+). Its function is as follows. Involved in base excision repair of DNA damaged by oxidation or by mutagenic agents. Acts as a DNA glycosylase that recognizes and removes damaged bases. Has a preference for oxidized purines, such as 7,8-dihydro-8-oxoguanine (8-oxoG). Has AP (apurinic/apyrimidinic) lyase activity and introduces nicks in the DNA strand. Cleaves the DNA backbone by beta-delta elimination to generate a single-strand break at the site of the removed base with both 3'- and 5'-phosphates. This is Formamidopyrimidine-DNA glycosylase from Variovorax paradoxus (strain S110).